A 372-amino-acid chain; its full sequence is Glutamate 5-kinase (372 aa).

Position 14 (K14) interacts with ATP. Positions 54, 141, and 153 each coordinate substrate. 173–174 (TD) serves as a coordination point for ATP. The PUA domain occupies 280–358 (RGTLVLDDGA…DAIESLLGYS (79 aa)).

It belongs to the glutamate 5-kinase family.

Its subcellular location is the cytoplasm. It carries out the reaction L-glutamate + ATP = L-glutamyl 5-phosphate + ADP. It participates in amino-acid biosynthesis; L-proline biosynthesis; L-glutamate 5-semialdehyde from L-glutamate: step 1/2. Its function is as follows. Catalyzes the transfer of a phosphate group to glutamate to form L-glutamate 5-phosphate. This is Glutamate 5-kinase from Pseudomonas entomophila (strain L48).